Here is a 546-residue protein sequence, read N- to C-terminus: Cysteine desulfurase SufS (546 aa).

The N-terminal stretch at 1–22 (MLRGPRCLYIYLFFVFLPFSFC) is a signal peptide. Position 291 is an N6-(pyridoxal phosphate)lysine (K291). The active-site Cysteine persulfide intermediate is C497.

Belongs to the class-V pyridoxal-phosphate-dependent aminotransferase family. Csd subfamily. As to quaternary structure, monomer. Interacts with SufE; interaction enhances cysteine desulfurase activity of SufS. Requires pyridoxal 5'-phosphate as cofactor. Proteolytically cleaved.

The protein resides in the plastid. It localises to the apicoplast. The enzyme catalyses (sulfur carrier)-H + L-cysteine = (sulfur carrier)-SH + L-alanine. Its pathway is cofactor biosynthesis; iron-sulfur cluster biosynthesis. Its function is as follows. Catalyzes sulfur activation and mobilization in sulfur mobilization (SUF) pathway for iron-sulfur (Fe-S) cluster biogenesis. Active when in complex with a partner protein SufE. Required for apicoplast maintenance. Plays a role in the development of sporozoites in oocysts in mosquitoes. May provide sulfur for MNMA-mediated tRNA modifications. In Plasmodium falciparum (isolate 3D7), this protein is Cysteine desulfurase SufS.